Here is a 426-residue protein sequence, read N- to C-terminus: MHKVTSEELFQRALKVAPGGVHSPVRSFKGLDRAPVFFKKAEGAYLTSVEDKKYIDFCQSFGPLILGHLDAEVKEEVHRMVDTAWTFGATEIYSLELAEWITSTLPFMEKLRFVSSGTEAVMSALRVARAATGRTKILKFEGCYHGHVDNLLVKAGSGLAGTAASSSAGIPAEVAAHTVVAPLDDEAKLAEVFAAQGKDIAAVIIEPLPANYGLLVQRPEFLKKVAELCEKNGSLLIFDEVISGFRVGLGGMVEKTGIRPDLVTYGKIIGGGFPVGCYGGKAELMNMVAPSGDVYQAGTLSANPIGMRAGLTTLKKMQRVDGWNVLEQRTKKFTDAIKAGFVKKGVNLEISQVASLFWIHGPTASPIRSIDHIPANQGGNFKNLFLKALDKGVYLAPNAYEVGFVSLAHSDELLEQAAQIIVDAAE.

Lys-267 is modified (N6-(pyridoxal phosphate)lysine).

It belongs to the class-III pyridoxal-phosphate-dependent aminotransferase family. HemL subfamily. As to quaternary structure, homodimer. Pyridoxal 5'-phosphate serves as cofactor.

The protein localises to the cytoplasm. The enzyme catalyses (S)-4-amino-5-oxopentanoate = 5-aminolevulinate. It functions in the pathway porphyrin-containing compound metabolism; protoporphyrin-IX biosynthesis; 5-aminolevulinate from L-glutamyl-tRNA(Glu): step 2/2. The chain is Glutamate-1-semialdehyde 2,1-aminomutase from Bdellovibrio bacteriovorus (strain ATCC 15356 / DSM 50701 / NCIMB 9529 / HD100).